The sequence spans 343 residues: Putative trace amine-associated receptor 3 (343 aa).

The Extracellular segment spans residues 1–35 (MDLTYIPEDLSSCPKFVNKILSSHQPLFSCPGDNV). Residues 36 to 56 (FGYDWSHDYPLFGNLVIMVSI) traverse the membrane as a helical segment. Over 57–68 (SHFKQLHSPTNF) the chain is Cytoplasmic. The chain crosses the membrane as a helical span at residues 69–89 (LILSMATTDFLLGFVIMPYSI). The Extracellular portion of the chain corresponds to 90–150 (MRSVESCWYF…TKMTNSTIKQ (61 aa)). Cys-104 and Cys-189 are oxidised to a cystine. N-linked (GlcNAc...) asparagine glycosylation occurs at Asn-145. The helical transmembrane segment at 151–168 (LLAFCWSVPALFSFGLVL) threads the bilayer. The Cytoplasmic portion of the chain corresponds to 169–172 (SEAD). The extracellular Loop 2 (ECL2) stretch occupies residues 173–186 (VSGMQSYKILVACF). A helical membrane pass occupies residues 173 to 193 (VSGMQSYKILVACFNFCALTF). Over 194-198 (NKFWG) the chain is Extracellular. Residues 199 to 223 (TILFTTCFFTPGSIMVGIYGKIFIV) form a helical membrane-spanning segment. Topologically, residues 224-257 (SKQHARVISHVPENTKGAVKKHLSKKKDRKAAKT) are cytoplasmic. The chain crosses the membrane as a helical span at residues 258-278 (LGIVMGVFLACWLPCFLAVLI). The Extracellular portion of the chain corresponds to 279–287 (DPYLDYSTP). A helical membrane pass occupies residues 288-308 (ILILDLLVWLRYFNSTCNPLI). At 309-343 (HGFFNPWFQKAFKYIVSGKIFSSHSETANLFPEAH) the chain is on the cytoplasmic side.

Belongs to the G-protein coupled receptor 1 family. As to expression, not expressed in the pons, thalamus, globus pallidus, caudate, putamen or cerebellum.

It localises to the cell membrane. Putative olfactory receptor activated by several primary trace amines. This Homo sapiens (Human) protein is Putative trace amine-associated receptor 3.